We begin with the raw amino-acid sequence, 235 residues long: Ribonuclease PH (235 aa).

Phosphate is bound by residues Arg86 and 124–126 (GTR).

Belongs to the RNase PH family. Homohexameric ring arranged as a trimer of dimers.

The catalysed reaction is tRNA(n+1) + phosphate = tRNA(n) + a ribonucleoside 5'-diphosphate. Phosphorolytic 3'-5' exoribonuclease that plays an important role in tRNA 3'-end maturation. Removes nucleotide residues following the 3'-CCA terminus of tRNAs; can also add nucleotides to the ends of RNA molecules by using nucleoside diphosphates as substrates, but this may not be physiologically important. Probably plays a role in initiation of 16S rRNA degradation (leading to ribosome degradation) during starvation. The sequence is that of Ribonuclease PH from Francisella philomiragia subsp. philomiragia (strain ATCC 25017 / CCUG 19701 / FSC 153 / O#319-036).